The chain runs to 606 residues: Probable glutamine--fructose-6-phosphate aminotransferase [isomerizing] (606 aa).

Cys2 acts as the For GATase activity in catalysis. One can recognise a Glutamine amidotransferase type-2 domain in the interval 2-224; it reads CGISACLNHT…DNDYGYITNN (223 aa). SIS domains are found at residues 282–427 and 458–596; these read FFPE…SLDN and LLEF…PDYP.

It catalyses the reaction D-fructose 6-phosphate + L-glutamine = D-glucosamine 6-phosphate + L-glutamate. The protein operates within nucleotide-sugar biosynthesis; UDP-N-acetyl-alpha-D-glucosamine biosynthesis; alpha-D-glucosamine 6-phosphate from D-fructose 6-phosphate: step 1/1. Its function is as follows. Controls the flux of glucose into the hexosamine pathway. Most likely involved in regulating the availability of precursors for glycosylation of proteins (Potential). In Acanthamoeba polyphaga (Amoeba), this protein is Probable glutamine--fructose-6-phosphate aminotransferase [isomerizing].